Consider the following 127-residue polypeptide: Glycine cleavage system H protein (127 aa).

The region spanning 24–105 (TALVGITDFA…YEDGWMVKVS (82 aa)) is the Lipoyl-binding domain. The residue at position 65 (Lys-65) is an N6-lipoyllysine.

Belongs to the GcvH family. In terms of assembly, the glycine cleavage system is composed of four proteins: P, T, L and H. It depends on (R)-lipoate as a cofactor.

Functionally, the glycine cleavage system catalyzes the degradation of glycine. The H protein shuttles the methylamine group of glycine from the P protein to the T protein. This Prosthecochloris aestuarii (strain DSM 271 / SK 413) protein is Glycine cleavage system H protein.